A 168-amino-acid polypeptide reads, in one-letter code: Crossover junction endodeoxyribonuclease RuvC (168 aa).

Residues D7, E66, and D138 contribute to the active site. Residues D7, E66, and D138 each coordinate Mg(2+).

The protein belongs to the RuvC family. Homodimer which binds Holliday junction (HJ) DNA. The HJ becomes 2-fold symmetrical on binding to RuvC with unstacked arms; it has a different conformation from HJ DNA in complex with RuvA. In the full resolvosome a probable DNA-RuvA(4)-RuvB(12)-RuvC(2) complex forms which resolves the HJ. Requires Mg(2+) as cofactor.

Its subcellular location is the cytoplasm. It catalyses the reaction Endonucleolytic cleavage at a junction such as a reciprocal single-stranded crossover between two homologous DNA duplexes (Holliday junction).. In terms of biological role, the RuvA-RuvB-RuvC complex processes Holliday junction (HJ) DNA during genetic recombination and DNA repair. Endonuclease that resolves HJ intermediates. Cleaves cruciform DNA by making single-stranded nicks across the HJ at symmetrical positions within the homologous arms, yielding a 5'-phosphate and a 3'-hydroxyl group; requires a central core of homology in the junction. The consensus cleavage sequence is 5'-(A/T)TT(C/G)-3'. Cleavage occurs on the 3'-side of the TT dinucleotide at the point of strand exchange. HJ branch migration catalyzed by RuvA-RuvB allows RuvC to scan DNA until it finds its consensus sequence, where it cleaves and resolves the cruciform DNA. The sequence is that of Crossover junction endodeoxyribonuclease RuvC from Cereibacter sphaeroides (strain ATCC 17023 / DSM 158 / JCM 6121 / CCUG 31486 / LMG 2827 / NBRC 12203 / NCIMB 8253 / ATH 2.4.1.) (Rhodobacter sphaeroides).